A 257-amino-acid polypeptide reads, in one-letter code: Deoxyribose-phosphate aldolase (257 aa).

Residue Asp102 is the Proton donor/acceptor of the active site. The Schiff-base intermediate with acetaldehyde role is filled by Lys166. Lys198 functions as the Proton donor/acceptor in the catalytic mechanism.

It belongs to the DeoC/FbaB aldolase family. DeoC type 2 subfamily.

Its subcellular location is the cytoplasm. The enzyme catalyses 2-deoxy-D-ribose 5-phosphate = D-glyceraldehyde 3-phosphate + acetaldehyde. Its pathway is carbohydrate degradation; 2-deoxy-D-ribose 1-phosphate degradation; D-glyceraldehyde 3-phosphate and acetaldehyde from 2-deoxy-alpha-D-ribose 1-phosphate: step 2/2. Functionally, catalyzes a reversible aldol reaction between acetaldehyde and D-glyceraldehyde 3-phosphate to generate 2-deoxy-D-ribose 5-phosphate. In Shewanella sediminis (strain HAW-EB3), this protein is Deoxyribose-phosphate aldolase.